We begin with the raw amino-acid sequence, 678 residues long: Oviduct-specific glycoprotein (678 aa).

The first 21 residues, 1–21 (MWKLLLWVGLVLVLKHHDGAA), serve as a signal peptide directing secretion. One can recognise a GH18 domain in the interval 22-385 (HKLVCYFTNW…YVLNDILVRA (364 aa)). C26 and C51 are disulfide-bonded. Residues 71–72 (LQ), 98–101 (GGWN), Y142, 211–214 (LSYD), and W355 each bind chitin. N-linked (GlcNAc...) asparagine glycosylation is found at N402 and N441. The segment at 524 to 544 (LTPVGHQSVTPVSHQSVSPGG) is disordered. Positions 528 to 544 (GHQSVTPVSHQSVSPGG) are enriched in polar residues. 3 N-linked (GlcNAc...) asparagine glycosylation sites follow: N580, N596, and N648. A disordered region spans residues 581 to 606 (ISVTPEGQTMPLRGENLTSEVGTHPR). Over residues 651–662 (SVNSVTPQTSPL) the composition is skewed to polar residues. The segment at 651–678 (SVNSVTPQTSPLSLKKEIPENSAVDEEA) is disordered.

Belongs to the glycosyl hydrolase 18 family. In terms of tissue distribution, oviduct.

It localises to the cytoplasmic vesicle. The protein localises to the secretory vesicle. Its function is as follows. Binds to oocyte zona pellucida in vivo. May play a role in the fertilization process and/or early embryonic development. The protein is Oviduct-specific glycoprotein (OVGP1) of Homo sapiens (Human).